The primary structure comprises 227 residues: Protein SSO0193 (227 aa).

An AMMECR1 domain is found at 15–209 (EIGRLLIEIA…ETKPNGSDII (195 aa)).

This Saccharolobus solfataricus (strain ATCC 35092 / DSM 1617 / JCM 11322 / P2) (Sulfolobus solfataricus) protein is Protein SSO0193.